Reading from the N-terminus, the 396-residue chain is NADH-quinone oxidoreductase subunit D (396 aa).

This sequence belongs to the complex I 49 kDa subunit family. In terms of assembly, NDH-1 is composed of 14 different subunits. Subunits NuoB, C, D, E, F, and G constitute the peripheral sector of the complex.

The protein resides in the cell inner membrane. It carries out the reaction a quinone + NADH + 5 H(+)(in) = a quinol + NAD(+) + 4 H(+)(out). NDH-1 shuttles electrons from NADH, via FMN and iron-sulfur (Fe-S) centers, to quinones in the respiratory chain. The immediate electron acceptor for the enzyme in this species is believed to be ubiquinone. Couples the redox reaction to proton translocation (for every two electrons transferred, four hydrogen ions are translocated across the cytoplasmic membrane), and thus conserves the redox energy in a proton gradient. This Agrobacterium fabrum (strain C58 / ATCC 33970) (Agrobacterium tumefaciens (strain C58)) protein is NADH-quinone oxidoreductase subunit D.